Here is a 37-residue protein sequence, read N- to C-terminus: Toxin Bcg III 28.78 (37 aa).

C6 and C31 are disulfide-bonded.

It is found in the secreted. The protein localises to the nematocyst. The protein is Toxin Bcg III 28.78 of Bunodosoma cangicum (Sea anemone).